We begin with the raw amino-acid sequence, 65 residues long: Putative potassium channel toxin Ts21 (65 aa).

The signal sequence occupies residues 1–25 (MNKVYLVAILVLSVLLVANVSPIEG). 3 cysteine pairs are disulfide-bonded: Cys-31-Cys-53, Cys-38-Cys-61, and Cys-42-Cys-63.

Belongs to the short scorpion toxin superfamily. Potassium channel inhibitor family. Alpha-KTx 11 subfamily. Expressed by the venom gland.

It is found in the secreted. Functionally, this recombinant toxin inhibits the mammalian voltage-gated potassium channels Kv1.3/KCNA3 in vitro with an IC(50) of 26.40 nM. In Tityus serrulatus (Brazilian scorpion), this protein is Putative potassium channel toxin Ts21.